We begin with the raw amino-acid sequence, 420 residues long: Glucose-1-phosphate adenylyltransferase (420 aa).

Residues tyrosine 107, glycine 173, 188–189, and serine 206 each bind alpha-D-glucose 1-phosphate; that span reads EK.

It belongs to the bacterial/plant glucose-1-phosphate adenylyltransferase family. As to quaternary structure, homotetramer.

The catalysed reaction is alpha-D-glucose 1-phosphate + ATP + H(+) = ADP-alpha-D-glucose + diphosphate. It participates in glycan biosynthesis; glycogen biosynthesis. Functionally, involved in the biosynthesis of ADP-glucose, a building block required for the elongation reactions to produce glycogen. Catalyzes the reaction between ATP and alpha-D-glucose 1-phosphate (G1P) to produce pyrophosphate and ADP-Glc. The sequence is that of Glucose-1-phosphate adenylyltransferase from Shewanella baltica (strain OS155 / ATCC BAA-1091).